Consider the following 457-residue polypeptide: MRYLCRAQLLSLLLLPLLKARLSVPAHPIPQSFLPLMISTWNYTDANREAWTVLRQGPRRTRQAVIQGCLHCQNSNSCGRLLGGHSAPDSSGGITLEAALIDGANMDYGAVAGMAGIRNAIGVAHDVLRYTNHSLLVGEAAARFAEAMGHKKEVHSLSTTLDVLLPWLLGKCQPNFWRNVRPLANDSCGTFSPLPQEQQQREMRQEYPIEPGHHDQVGFLALDTEGHLHAASLSSGARFRIPGRVGDAAVPGAGIYADNQVGGALATGDGDVLMRFLPALLAVEALRAGQSPASAAEAVMRRLLRHHTEFNGGLVVVSRLGVYSAACAGLDEFQFVVSGESSGRSMRRVEGIKCLDRHEVVTGGPRGNFYVVSKKIWAAGGEDVLVQRVEKITLNEGVDSREFEEEYLEDKDAEIDVDEGEKAEEVRSLLDESPGDLLLHQLGLAPPFPFRFPFIYF.

The first 20 residues, 1–20, serve as a signal peptide directing secretion; the sequence is MRYLCRAQLLSLLLLPLLKA. Disulfide bonds link C72/C78, C172/C188, and C327/C354.

It belongs to the Ntn-hydrolase family.

The chain is L-asparaginase-like protein GL17509 from Drosophila persimilis (Fruit fly).